Reading from the N-terminus, the 189-residue chain is CASP-like protein 1U2 (189 aa).

The Cytoplasmic segment spans residues 1–24; it reads MFGSDDSGCHVMDDDVAPPANGSK. Residues 25–45 form a helical membrane-spanning segment; that stretch reads AVTLLLRLITLALALTSAVLM. Residues 46–71 are Extracellular-facing; it reads ATASECTIYGLDGATATTVTFKDYQP. The helical transmembrane segment at 72–92 threads the bilayer; the sequence is FIYLVGSNIAATILEVAAIYV. The Cytoplasmic segment spans residues 93–109; the sequence is QVGKGDDVEDAPMIPRV. A helical transmembrane segment spans residues 110–130; sequence VLVVVDVAVQMLLYSATGAVF. Over 131–158 the chain is Extracellular; sequence AAVMAYGPQISACTGAAGHFCEQVQRSK. The chain crosses the membrane as a helical span at residues 159 to 179; sequence IISLAASLSAVLAAVAKDVAL. Residues 180–189 lie on the Cytoplasmic side of the membrane; that stretch reads PCSVWPHPSS.

It belongs to the Casparian strip membrane proteins (CASP) family. In terms of assembly, homodimer and heterodimers.

The protein resides in the cell membrane. In Sorghum bicolor (Sorghum), this protein is CASP-like protein 1U2.